The primary structure comprises 84 residues: Beta-mammal Tt1g (84 aa).

The first 20 residues, 1 to 20 (MKGMILFISCILLIGIVVEC), serve as a signal peptide directing secretion. The region spanning 21–82 (KEGYLMDHEG…VWERATNRCG (62 aa)) is the LCN-type CS-alpha/beta domain. 4 cysteine pairs are disulfide-bonded: C31–C81, C35–C57, C43–C62, and C47–C64. C81 carries the cysteine amide modification.

This sequence belongs to the long (4 C-C) scorpion toxin superfamily. Sodium channel inhibitor family. Beta subfamily. Expressed by the venom gland.

The protein resides in the secreted. Functionally, beta toxins modify sodium channel function in two ways: an excitatory effect (shifting the activation process to more negative potential) and/or a depressant effect (reducing the peak current). At concentration of 500 nM this toxin produces channel opening at more negative potentials in hNav1.2/SCN2A and hNav1.3/SCN3A, which shows the biggest effect. On the other hand the peak current is decreased in hNav1.4/SCN4A and hNav1.5/SCN5A channels, without apparent modification of the activation gate. This toxin is active against mammals. The sequence is that of Beta-mammal Tt1g from Tityus trivittatus (Argentinean scorpion).